Reading from the N-terminus, the 489-residue chain is Rhamnulokinase (489 aa).

13–17 lines the ATP pocket; that stretch reads ASSGR. The cysteines at positions 68 and 222 are disulfide-linked. Residues G83 and 236–238 each bind substrate; that span reads HDT. D237 functions as the Proton acceptor in the catalytic mechanism. T259 contacts ATP. N296 provides a ligand contact to substrate. Q304 lines the ATP pocket. Cysteines 353 and 370 form a disulfide. G402 lines the ATP pocket. C413 and C417 are oxidised to a cystine.

The protein belongs to the rhamnulokinase family. Mg(2+) serves as cofactor.

It carries out the reaction L-rhamnulose + ATP = L-rhamnulose 1-phosphate + ADP + H(+). Its pathway is carbohydrate degradation; L-rhamnose degradation; glycerone phosphate from L-rhamnose: step 2/3. Functionally, involved in the catabolism of L-rhamnose (6-deoxy-L-mannose). Catalyzes the transfer of the gamma-phosphate group from ATP to the 1-hydroxyl group of L-rhamnulose to yield L-rhamnulose 1-phosphate. The polypeptide is Rhamnulokinase (Shigella flexneri serotype 5b (strain 8401)).